We begin with the raw amino-acid sequence, 115 residues long: Hydrogenase maturation factor HypA (115 aa).

His2 contacts Ni(2+). Positions 73, 76, 89, and 92 each coordinate Zn(2+).

The protein belongs to the HypA/HybF family.

Functionally, involved in the maturation of [NiFe] hydrogenases. Required for nickel insertion into the metal center of the hydrogenase. The protein is Hydrogenase maturation factor HypA of Nitrosospira multiformis (strain ATCC 25196 / NCIMB 11849 / C 71).